A 366-amino-acid chain; its full sequence is Aminomethyltransferase (366 aa).

This sequence belongs to the GcvT family. The glycine cleavage system is composed of four proteins: P, T, L and H.

The catalysed reaction is N(6)-[(R)-S(8)-aminomethyldihydrolipoyl]-L-lysyl-[protein] + (6S)-5,6,7,8-tetrahydrofolate = N(6)-[(R)-dihydrolipoyl]-L-lysyl-[protein] + (6R)-5,10-methylene-5,6,7,8-tetrahydrofolate + NH4(+). The glycine cleavage system catalyzes the degradation of glycine. The polypeptide is Aminomethyltransferase (Sodalis glossinidius (strain morsitans)).